The chain runs to 466 residues: ATP-dependent protease ATPase subunit HslU (466 aa).

Residues Ile-18, 60-65 (GVGKTE), Asp-279, Glu-344, and Arg-416 each bind ATP.

This sequence belongs to the ClpX chaperone family. HslU subfamily. In terms of assembly, a double ring-shaped homohexamer of HslV is capped on each side by a ring-shaped HslU homohexamer. The assembly of the HslU/HslV complex is dependent on binding of ATP.

The protein localises to the cytoplasm. Functionally, ATPase subunit of a proteasome-like degradation complex; this subunit has chaperone activity. The binding of ATP and its subsequent hydrolysis by HslU are essential for unfolding of protein substrates subsequently hydrolyzed by HslV. HslU recognizes the N-terminal part of its protein substrates and unfolds these before they are guided to HslV for hydrolysis. This chain is ATP-dependent protease ATPase subunit HslU, found in Syntrophomonas wolfei subsp. wolfei (strain DSM 2245B / Goettingen).